We begin with the raw amino-acid sequence, 88 residues long: Elongation factor 1-beta (88 aa).

Belongs to the EF-1-beta/EF-1-delta family.

Promotes the exchange of GDP for GTP in EF-1-alpha/GDP, thus allowing the regeneration of EF-1-alpha/GTP that could then be used to form the ternary complex EF-1-alpha/GTP/AAtRNA. The chain is Elongation factor 1-beta from Halorubrum lacusprofundi (strain ATCC 49239 / DSM 5036 / JCM 8891 / ACAM 34).